The primary structure comprises 95 residues: Alpha-conotoxin-like Cp20.5 (95 aa).

A signal peptide spans 1–24 (MPKLAVVLLVLLILPLSYFDAAGG). A propeptide spanning residues 25–45 (QAVQGDRRGNGLARYLQRNGR) is cleaved from the precursor. At glutamate 50 the chain carries 4-carboxyglutamate. Proline 56 carries the 4-hydroxyproline modification. 4 disulfides stabilise this stretch: cysteine 64/cysteine 73, cysteine 69/cysteine 81, cysteine 74/cysteine 91, and cysteine 79/cysteine 93.

Belongs to the conotoxin D superfamily. As to quaternary structure, hetero-, homo- or pseudo-homodimer (identical sequence, different post-translational modifications). Expressed by the venom duct.

The protein resides in the secreted. In terms of biological role, alpha-conotoxins act on postsynaptic membranes, they bind to the nicotinic acetylcholine receptors (nAChR) and thus inhibit them. Through its two C-terminal domains, this homodimeric protein would bind to two nAChR allosteric sites, located outside the nAChR C-loop of the principal binding face and at the adjacent binding interface in a clockwise direction. This toxin specifically blocks mammalian neuronal nAChR of the alpha-7/CHRNA7, alpha-3-beta-2/CHRNA3-CHRNB2 and alpha-4-beta-2/CHRNA4-CHRNB2 subtypes. The polypeptide is Alpha-conotoxin-like Cp20.5 (Conus capitaneus (Captain cone)).